A 229-amino-acid chain; its full sequence is 5'-methylthioadenosine/S-adenosylhomocysteine nucleosidase (229 aa).

Glu-12 serves as the catalytic Proton acceptor. Substrate is bound by residues Gly-78, Ile-152, and 173 to 174; that span reads ME. Asp-197 (proton donor) is an active-site residue.

Belongs to the PNP/UDP phosphorylase family. MtnN subfamily.

The enzyme catalyses S-adenosyl-L-homocysteine + H2O = S-(5-deoxy-D-ribos-5-yl)-L-homocysteine + adenine. The catalysed reaction is S-methyl-5'-thioadenosine + H2O = 5-(methylsulfanyl)-D-ribose + adenine. It carries out the reaction 5'-deoxyadenosine + H2O = 5-deoxy-D-ribose + adenine. It functions in the pathway amino-acid biosynthesis; L-methionine biosynthesis via salvage pathway; S-methyl-5-thio-alpha-D-ribose 1-phosphate from S-methyl-5'-thioadenosine (hydrolase route): step 1/2. Functionally, catalyzes the irreversible cleavage of the glycosidic bond in both 5'-methylthioadenosine (MTA) and S-adenosylhomocysteine (SAH/AdoHcy) to adenine and the corresponding thioribose, 5'-methylthioribose and S-ribosylhomocysteine, respectively. Also cleaves 5'-deoxyadenosine, a toxic by-product of radical S-adenosylmethionine (SAM) enzymes, into 5-deoxyribose and adenine. This chain is 5'-methylthioadenosine/S-adenosylhomocysteine nucleosidase, found in Haemophilus influenzae (strain PittGG).